Here is a 166-residue protein sequence, read N- to C-terminus: Phosphopantetheine adenylyltransferase (166 aa).

T9 lines the substrate pocket. ATP contacts are provided by residues T9–F10 and H17. Substrate-binding residues include K41, L73, and R87. ATP contacts are provided by residues G88–R90, E98, and Y123–T129.

This sequence belongs to the bacterial CoaD family. Homohexamer. It depends on Mg(2+) as a cofactor.

It is found in the cytoplasm. It carries out the reaction (R)-4'-phosphopantetheine + ATP + H(+) = 3'-dephospho-CoA + diphosphate. Its pathway is cofactor biosynthesis; coenzyme A biosynthesis; CoA from (R)-pantothenate: step 4/5. In terms of biological role, reversibly transfers an adenylyl group from ATP to 4'-phosphopantetheine, yielding dephospho-CoA (dPCoA) and pyrophosphate. This Burkholderia mallei (strain NCTC 10229) protein is Phosphopantetheine adenylyltransferase.